Consider the following 580-residue polypeptide: Sensor histidine kinase YvrG (580 aa).

Residues 1–6 are Cytoplasmic-facing; sequence MRLRWK. Residues 7–27 traverse the membrane as a helical segment; the sequence is FLFHFFGQMLIVILLLTVMLV. At 28 to 261 the chain is on the extracellular side; that stretch reads ASFFYLDARF…KSFLKVVLKA (234 aa). The helical transmembrane segment at 262–282 threads the bilayer; sequence MFLVMAVLFMYIIWMTVWYMF. Residues 283 to 580 lie on the Cytoplasmic side of the membrane; it reads RFGLPIFHTI…TVITILFKKQ (298 aa). The region spanning 363-580 is the Histidine kinase domain; sequence GLSHDLKTPL…TVITILFKKQ (218 aa). His366 is subject to Phosphohistidine; by autocatalysis.

The protein localises to the cell membrane. The enzyme catalyses ATP + protein L-histidine = ADP + protein N-phospho-L-histidine.. In terms of biological role, member of the two-component regulatory system YvrG/YvrH that positively regulates 7 transcriptional units (wprA, wapA-yxxG, dltABCDE, sunA, sunT-bdbA-yolJ-bdbB, sigO-rsoA, and sigX-rsiX), and negatively regulates the lytABC operon. Probably activates YvrH by phosphorylation. The chain is Sensor histidine kinase YvrG (yvrG) from Bacillus subtilis (strain 168).